Reading from the N-terminus, the 398-residue chain is Succinate--CoA ligase [ADP-forming] subunit beta (398 aa).

The 246-residue stretch at 9–254 folds into the ATP-grasp domain; it reads KAVLREFGVS…ETEEDAKEIE (246 aa). Residues Lys-46, 53 to 55, Glu-109, Ala-112, and Glu-117 each bind ATP; that span reads GRG. The Mg(2+) site is built by Asn-209 and Asp-223. Residues Asn-274 and 331–333 contribute to the substrate site; that span reads GIM.

This sequence belongs to the succinate/malate CoA ligase beta subunit family. Heterotetramer of two alpha and two beta subunits. Requires Mg(2+) as cofactor.

The enzyme catalyses succinate + ATP + CoA = succinyl-CoA + ADP + phosphate. The catalysed reaction is GTP + succinate + CoA = succinyl-CoA + GDP + phosphate. The protein operates within carbohydrate metabolism; tricarboxylic acid cycle; succinate from succinyl-CoA (ligase route): step 1/1. Its function is as follows. Succinyl-CoA synthetase functions in the citric acid cycle (TCA), coupling the hydrolysis of succinyl-CoA to the synthesis of either ATP or GTP and thus represents the only step of substrate-level phosphorylation in the TCA. The beta subunit provides nucleotide specificity of the enzyme and binds the substrate succinate, while the binding sites for coenzyme A and phosphate are found in the alpha subunit. The chain is Succinate--CoA ligase [ADP-forming] subunit beta from Afipia carboxidovorans (strain ATCC 49405 / DSM 1227 / KCTC 32145 / OM5) (Oligotropha carboxidovorans).